The primary structure comprises 148 residues: UPF0178 protein SUN_1096 (148 aa).

This sequence belongs to the UPF0178 family.

In Sulfurovum sp. (strain NBC37-1), this protein is UPF0178 protein SUN_1096.